The sequence spans 303 residues: Acetylglutamate kinase (303 aa).

Residues 76-77 (GG), arginine 98, and asparagine 192 contribute to the substrate site.

This sequence belongs to the acetylglutamate kinase family. ArgB subfamily.

Its subcellular location is the cytoplasm. The catalysed reaction is N-acetyl-L-glutamate + ATP = N-acetyl-L-glutamyl 5-phosphate + ADP. It functions in the pathway amino-acid biosynthesis; L-arginine biosynthesis; N(2)-acetyl-L-ornithine from L-glutamate: step 2/4. Its function is as follows. Catalyzes the ATP-dependent phosphorylation of N-acetyl-L-glutamate. The chain is Acetylglutamate kinase from Chlorobium phaeobacteroides (strain DSM 266 / SMG 266 / 2430).